The following is a 188-amino-acid chain: Phosphatidylcholine-sterol acyltransferase (188 aa).

Asn-20 is a glycosylation site (N-linked (GlcNAc...) asparagine). The active-site Charge relay system is His-169.

Belongs to the AB hydrolase superfamily. Lipase family. In terms of tissue distribution, detected in blood plasma (at protein level).

The protein resides in the secreted. The catalysed reaction is a sterol + a 1,2-diacyl-sn-glycero-3-phosphocholine = a sterol ester + a 1-acyl-sn-glycero-3-phosphocholine. The enzyme catalyses a 1-O-alkyl-2-acetyl-sn-glycero-3-phosphocholine + H2O = a 1-O-alkyl-sn-glycero-3-phosphocholine + acetate + H(+). It catalyses the reaction a 1-hexadecanoyl-2-acyl-sn-glycero-3-phosphocholine + (24S)-hydroxycholesterol = (24S)-24-hydroxycholesterol ester + 1-hexadecanoyl-sn-glycero-3-phosphocholine. It carries out the reaction (24S)-hydroxycholesterol + 1-hexadecanoyl-2-(9Z,12Z-octadecadienoyl)-sn-glycero-3-phosphocholine = (24S)-hydroxycholesterol 3-linoleoate + 1-hexadecanoyl-sn-glycero-3-phosphocholine. The catalysed reaction is 1-hexadecanoyl-2-(5Z,8Z,11Z,14Z-eicosatetraenoyl)-sn-glycero-3-phosphocholine + cholesterol = cholesteryl (5Z,8Z,11Z,14Z)-eicosatetraenoate + 1-hexadecanoyl-sn-glycero-3-phosphocholine. The enzyme catalyses 1-hexadecanoyl-2-(9Z-octadecenoyl)-sn-glycero-3-phosphocholine + cholesterol = cholesteryl (9Z-octadecenoate) + 1-hexadecanoyl-sn-glycero-3-phosphocholine. It catalyses the reaction 1-hexadecanoyl-2-(8Z,11Z,14Z-eicosatrienoyl)-sn-glycero-3-phosphocholine + cholesterol = cholesteryl (8Z,11Z,14Z)-eicosatrienoate + 1-hexadecanoyl-sn-glycero-3-phosphocholine. It carries out the reaction 1-hexadecanoyl-2-(5Z,8Z,11Z-eicosatrienoyl)-sn-glycero-3-phosphocholine + cholesterol = cholesteryl (5Z,8Z,11Z)-eicosatrienoate + 1-hexadecanoyl-sn-glycero-3-phosphocholine. The catalysed reaction is 1-hexadecanoyl-2-(5Z,8Z,11Z,14Z,17Z-eicosapentaenoyl)-sn-glycero-3-phosphocholine + cholesterol = (5Z,8Z,11Z,14Z,17Z-eicosapentaenoyl)-cholesterol + 1-hexadecanoyl-sn-glycero-3-phosphocholine. The enzyme catalyses 1-hexadecanoyl-2-(9Z,12Z-octadecadienoyl)-sn-glycero-3-phosphocholine + cholesterol = cholesteryl (9Z,12Z)-octadecadienoate + 1-hexadecanoyl-sn-glycero-3-phosphocholine. It catalyses the reaction 1-hexadecanoyl-2-(6Z,9Z,12Z-octadecatrienoyl)-sn-glycero-3-phosphocholine + cholesterol = (6Z,9Z,12Z-octadecatrienoyl)-cholesterol + 1-hexadecanoyl-sn-glycero-3-phosphocholine. It carries out the reaction 1-hexadecanoyl-2-(11Z,14Z,17Z-eicosatrienoyl)-sn-glycero-3-phosphocholine + cholesterol = (11Z,14Z,17Z-eicosatrienoyl)-cholesterol + 1-hexadecanoyl-sn-glycero-3-phosphocholine. The catalysed reaction is 1-hexadecanoyl-2-(9Z,12Z,15Z-octadecatrienoyl)-sn-glycero-3-phosphocholine + cholesterol = (9Z,12Z,15Z-octadecatrienoyl)-cholesterol + 1-hexadecanoyl-sn-glycero-3-phosphocholine. The enzyme catalyses 1-hexadecanoyl-2-(9Z,12Z-octadecadienoyl)-sn-glycero-3-phosphocholine + H2O = (9Z,12Z)-octadecadienoate + 1-hexadecanoyl-sn-glycero-3-phosphocholine + H(+). It catalyses the reaction 1-hexadecanoyl-2-(5Z,8Z,11Z,14Z-eicosatetraenoyl)-sn-glycero-3-phosphocholine + H2O = 1-hexadecanoyl-sn-glycero-3-phosphocholine + (5Z,8Z,11Z,14Z)-eicosatetraenoate + H(+). It carries out the reaction a 1-O-alkyl-2-acetyl-sn-glycero-3-phosphocholine + 1-hexadecanoyl-sn-glycero-3-phosphocholine = 1-hexadecanoyl-2-acetyl-sn-glycero-3-phosphocholine + a 1-O-alkyl-sn-glycero-3-phosphocholine. Central enzyme in the extracellular metabolism of plasma lipoproteins. Synthesized mainly in the liver and secreted into plasma where it converts cholesterol and phosphatidylcholines (lecithins) to cholesteryl esters and lysophosphatidylcholines on the surface of high and low density lipoproteins (HDLs and LDLs). The cholesterol ester is then transported back to the liver. Also produced in the brain by primary astrocytes, and esterifies free cholesterol on nascent APOE-containing lipoproteins secreted from glia and influences cerebral spinal fluid (CSF) APOE- and APOA1 levels. Together with APOE and the cholesterol transporter ABCA1, plays a key role in the maturation of glial-derived, nascent lipoproteins. Required for remodeling high-density lipoprotein particles into their spherical forms. Has a preference for plasma 16:0-18:2 or 18:O-18:2 phosphatidylcholines. Catalyzes the hydrolysis of 1-O-alkyl-2-acetyl-sn-glycero-3-phosphocholine (platelet-activating factor or PAF) to 1-O-alkyl-sn-glycero-3-phosphocholine (lyso-PAF). Also catalyzes the transfer of the acetate group from PAF to 1-hexadecanoyl-sn-glycero-3-phosphocholine forming lyso-PAF. Catalyzes the esterification of (24S)-hydroxycholesterol (24(S)OH-C), also known as cerebrosterol to produce 24(S)OH-C monoesters. The sequence is that of Phosphatidylcholine-sterol acyltransferase (LCAT) from Sus scrofa (Pig).